The primary structure comprises 74 residues: Sec-independent protein translocase protein TatA (74 aa).

The chain crosses the membrane as a helical span at residues 1-21 (MGGISIWQLLIIVAIIVLLFG). Positions 51 to 74 (ANFDKVEAKESTSTTEKTKEKEQA) are disordered.

It belongs to the TatA/E family. As to quaternary structure, the Tat system comprises two distinct complexes: a TatABC complex, containing multiple copies of TatA, TatB and TatC subunits, and a separate TatA complex, containing only TatA subunits. Substrates initially bind to the TatABC complex, which probably triggers association of the separate TatA complex to form the active translocon.

The protein resides in the cell inner membrane. In terms of biological role, part of the twin-arginine translocation (Tat) system that transports large folded proteins containing a characteristic twin-arginine motif in their signal peptide across membranes. TatA could form the protein-conducting channel of the Tat system. This Haemophilus ducreyi (strain 35000HP / ATCC 700724) protein is Sec-independent protein translocase protein TatA.